We begin with the raw amino-acid sequence, 585 residues long: A-type ATP synthase subunit A (585 aa).

231–238 lines the ATP pocket; it reads GPFGSGKT.

This sequence belongs to the ATPase alpha/beta chains family. As to quaternary structure, has multiple subunits with at least A(3), B(3), C, D, E, F, H, I and proteolipid K(x).

It is found in the cell membrane. It catalyses the reaction ATP + H2O + 4 H(+)(in) = ADP + phosphate + 5 H(+)(out). Its function is as follows. Component of the A-type ATP synthase that produces ATP from ADP in the presence of a proton gradient across the membrane. The A chain is the catalytic subunit. The sequence is that of A-type ATP synthase subunit A from Thermococcus sibiricus (strain DSM 12597 / MM 739).